A 1441-amino-acid polypeptide reads, in one-letter code: Histone-lysine N-methyltransferase SETD5 (1441 aa).

The interval 1–28 is disordered; it reads MSIAIPLGVTTPDTSYSDMAAGSDPESV. The residue at position 70 (Leu-70) is a Phosphothreonine. Phosphoserine is present on residues Ser-72 and Val-74. The segment at 156 to 202 is disordered; sequence TPTSITLTVRRTKPKKRKKSPEKGRAAPKTKKIKNSPSEAQNLDENT. Residues 165 to 189 are compositionally biased toward basic residues; the sequence is RRTKPKKRKKSPEKGRAAPKTKKIK. Residues 190 to 202 show a composition bias toward polar residues; sequence NSPSEAQNLDENT. In terms of domain architecture, SET spans 269–390; it reads MQLQLGRVTR…KDAEVTIAFD (122 aa). Disordered regions lie at residues 417–683 and 793–816; these read NPNA…TVIS and MTQTSSVPQETRTQHLYQSNETSN. Acidic residues-rich tracts occupy residues 450–461 and 479–501; these read LEQQNEVPEENP and EEVDNPEEKPEEEEKEEATDDQE. Composition is skewed to low complexity over residues 539-552 and 561-572; these read SSSDIEITTSSSEI and AAPESEVSSPVS. Over residues 575 to 588 the composition is skewed to polar residues; sequence AIPSTPQSTGVNTR. Residues 611–621 are compositionally biased toward basic residues; that stretch reads SRPRPKSRISR. Residues 635-650 are compositionally biased toward low complexity; it reads QAIAQQAELSQAALEE. A compositionally biased stretch (polar residues) spans 652–683; it reads GSNNSVTPPEAGNTDSSGENRQLTGSDPTVIS. Phosphoserine occurs at positions 829 and 852. 3 disordered regions span residues 849–883, 1036–1228, and 1243–1441; these read QPLSPVTPPPPSSGSKSPQLTTPGQTHPGEEECRN, DLSR…SKGA, and CDSP…TGLS. Thr-855 is modified (phosphothreonine). Basic residues predominate over residues 1062–1076; that stretch reads QRKKVSLLEYRKRKQ. The span at 1087–1107 shows a compositional bias: low complexity; that stretch reads DSSQSKSKSSGAGQGSSNSVS. Polar residues predominate over residues 1144 to 1163; the sequence is PSDSRGTSSSHCRPQENISS. Ser-1197 carries the post-translational modification Phosphoserine. Low complexity predominate over residues 1250 to 1259; sequence SQSLLQQSSS. A compositionally biased stretch (polar residues) spans 1265 to 1275; the sequence is PTQSPGYSYRT. Low complexity predominate over residues 1284–1300; it reads PSHGSSESSLSSTSYPS. Residues 1319 to 1333 are compositionally biased toward polar residues; that stretch reads YYSSQPHSGNSTGSN. Residues 1335-1372 show a composition bias toward low complexity; sequence PRRSCSSSAASPTPQGPSDSPTSDSVSQSSTGTLSSTS. 3 stretches are compositionally biased toward polar residues: residues 1373–1382, 1389–1412, and 1429–1441; these read FPQNSRSSLP, SLPNAGQSAAYQASRVSAVSNSQH, and LQGSGVKTQTGLS.

As to quaternary structure, interacts with components of the PAF1 complex (PAF1C) such as LEO1, CTR9 and CDC73. Interacts with NCOR1. Interacts with HDAC3. As to expression, ubiquitously expressed.

It localises to the nucleus. The protein localises to the chromosome. The enzyme catalyses L-lysyl(9)-[histone H3] + S-adenosyl-L-methionine = N(6)-methyl-L-lysyl(9)-[histone H3] + S-adenosyl-L-homocysteine + H(+). It carries out the reaction L-lysyl(36)-[histone H3] + 3 S-adenosyl-L-methionine = N(6),N(6),N(6)-trimethyl-L-lysyl(36)-[histone H3] + 3 S-adenosyl-L-homocysteine + 3 H(+). Functionally, chromatin regulator required for brain development: acts as a regulator of RNA elongation rate, thereby regulating neural stem cell (NSC) proliferation and synaptic transmission. May act by mediating trimethylation of 'Lys-36' of histone H3 (H3K36me3), which is essential to allow on-time RNA elongation dynamics. Also monomethylates 'Lys-9' of histone H3 (H3K9me1) in vitro. The relevance of histone methyltransferase activity is however subject to discussion. This Mus musculus (Mouse) protein is Histone-lysine N-methyltransferase SETD5.